The primary structure comprises 365 residues: MSSSFGKIFRVSTFGESHGGAVGVILDGCPPKLKVDINLIQNELDRRRPGQSDITTPRNEEDKIEILSGIKEGFTLGTPIAMLVRNKDQRPGDYDNLEQVFRPSHADGTYHLKYGIQASSGGGRASARETIGRVAAGAVAKQLLKTFCNTEILSWVKRIHDIESDINKEKISLKQIDSNIVRCPDEKVSTEMIERIKELKRQGDSCGGVIECLVRNVPSGLGMPVFDKLEADLAKALMSLPATKGFEIGSGFSGTYLKGSEHNDAFIKSDDISKLRTTSNNSGGIQGGISNGENIEMKIAFKPTATIGKEQKTVNAEGKEVLMKAKGRHDPCVLPRAVPMVDAMVALVLADHLLLNHAQCDLINK.

Arginine 47 contributes to the NADP(+) binding site. FMN contacts are provided by residues 124 to 126, glycine 287, 302 to 306, and arginine 328; these read RAS and KPTAT.

The protein belongs to the chorismate synthase family. As to quaternary structure, homotetramer. It depends on FMNH2 as a cofactor.

It carries out the reaction 5-O-(1-carboxyvinyl)-3-phosphoshikimate = chorismate + phosphate. It participates in metabolic intermediate biosynthesis; chorismate biosynthesis; chorismate from D-erythrose 4-phosphate and phosphoenolpyruvate: step 7/7. Catalyzes the anti-1,4-elimination of the C-3 phosphate and the C-6 proR hydrogen from 5-enolpyruvylshikimate-3-phosphate (EPSP) to yield chorismate, which is the branch point compound that serves as the starting substrate for the three terminal pathways of aromatic amino acid biosynthesis. This reaction introduces a second double bond into the aromatic ring system. The sequence is that of Chorismate synthase from Prochlorococcus marinus (strain AS9601).